We begin with the raw amino-acid sequence, 80 residues long: Metallothionein-like protein type 2, MT2-22 (80 aa).

Belongs to the metallothionein superfamily. Type 15 family.

Functionally, metallothioneins have a high content of cysteine residues that bind various heavy metals. The chain is Metallothionein-like protein type 2, MT2-22 from Brassica juncea (Indian mustard).